A 613-amino-acid polypeptide reads, in one-letter code: YTH domain-containing family protein 2 (613 aa).

Disordered regions lie at residues 1 to 43 (MSAS…AQPR), 215 to 234 (SQVSTAPTMPPASMAPAKTA), and 244 to 396 (AKPQ…TVPA). Positions 2-397 (SASSLLEQRP…GMGGITVPAE (396 aa)) are localization to mRNA processing bodies (P-bodies). The segment covering 16 to 27 (NKVQNGAVTQKD) has biased composition (polar residues). 3 stretches are compositionally biased toward low complexity: residues 218-234 (STAPTMPPASMAPAKTA), 295-307 (NGQPPNQSSPQPG), and 345-360 (PPQLSQGPPASQPSQP). Positions 398-613 (PHPVLEKLRM…RMQDRQGRVK (216 aa)) are interaction with m6A-containing mRNAs. A YTH domain is found at 423-557 (GRVFIIKSYS…DKARQVLKII (135 aa)). RNA-binding positions include 429-431 (KSY), aspartate 435, 445-446 (WC), asparagine 475, tryptophan 499, and tryptophan 504. 2 stretches are compositionally biased toward basic and acidic residues: residues 578–587 (EEEESVKKVE) and 604–613 (RMQDRQGRVK). A disordered region spans residues 578–613 (EEEESVKKVEVQGSDPYSNNSSRSHYRMQDRQGRVK).

It belongs to the YTHDF family. YTHDF2 subfamily.

It localises to the cytoplasm. The protein localises to the cytosol. It is found in the P-body. The protein resides in the stress granule. Its subcellular location is the nucleus. Functionally, specifically recognizes and binds N6-methyladenosine (m6A)-containing RNAs, and regulates their stability. M6A is a modification present at internal sites of mRNAs and some non-coding RNAs and plays a role in mRNA stability and processing. Acts as a regulator of mRNA stability by promoting degradation of m6A-containing mRNAs. The YTHDF paralogs (ythdf1, ythdf2 and ythdf3) share m6A-containing mRNAs targets and act redundantly to mediate mRNA degradation and cellular differentiation. Plays a key role in maternal-to-zygotic transition during early embryonic development, the process during which maternally inherited mRNAs are degraded: acts by binding m6A-containing maternal mRNAs and promoting their degradation. More than one-third of maternal mRNAs can be modified by m6A. Binding to m6A-containing mRNAs results in mRNA degradation. Also involved in hematopoietic stem cells specification by binding to m6A-containing mRNAs, such as notch1a, and promote their degradation. The decreased Notch signaling following notch1a degradation promotes endothelial to hematopoietic transition. Promotes formation of phase-separated membraneless compartments, such as P-bodies or stress granules, by undergoing liquid-liquid phase separation upon binding to mRNAs containing multiple m6A-modified residues: polymethylated mRNAs act as a multivalent scaffold for the binding of YTHDF proteins, juxtaposing their disordered regions and thereby leading to phase separation. The resulting mRNA-YTHDF complexes then partition into different endogenous phase-separated membraneless compartments, such as P-bodies, stress granules or neuronal RNA granules. This Danio rerio (Zebrafish) protein is YTH domain-containing family protein 2.